The following is a 341-amino-acid chain: Phosphate acyltransferase (341 aa).

It belongs to the PlsX family. Homodimer. Probably interacts with PlsY.

The protein resides in the cytoplasm. It catalyses the reaction a fatty acyl-[ACP] + phosphate = an acyl phosphate + holo-[ACP]. It participates in lipid metabolism; phospholipid metabolism. Functionally, catalyzes the reversible formation of acyl-phosphate (acyl-PO(4)) from acyl-[acyl-carrier-protein] (acyl-ACP). This enzyme utilizes acyl-ACP as fatty acyl donor, but not acyl-CoA. In Elusimicrobium minutum (strain Pei191), this protein is Phosphate acyltransferase.